A 490-amino-acid chain; its full sequence is Histone-lysine N-methyltransferase Smyd1 (490 aa).

One can recognise an SET domain in the interval Glu7–Ile253. Lys17–Arg19 lines the S-adenosyl-L-methionine pocket. Zn(2+)-binding residues include Cys52, Cys55, Cys65, Cys68, Cys74, Cys78, His86, and Cys90. The MYND-type zinc finger occupies Cys52–Cys90. Residues His135 and Asn205–His206 contribute to the S-adenosyl-L-methionine site. A Zn(2+)-binding site is contributed by Cys208. Residue Tyr270–Phe272 coordinates S-adenosyl-L-methionine. The Zn(2+) site is built by Cys274, Cys276, and Cys279.

Belongs to the class V-like SAM-binding methyltransferase superfamily. In terms of assembly, interacts with HDAC1, HDAC2 and HDAC3. Interacts (via MYND-type zinc finger) with NACA isoform skNAC. Expressed in cardiac and skeletal muscle, lymphocytes and thymus.

The protein resides in the cytoplasm. It is found in the nucleus. The catalysed reaction is L-lysyl(4)-[histone H3] + 3 S-adenosyl-L-methionine = N(6),N(6),N(6)-trimethyl-L-lysyl(4)-[histone H3] + 3 S-adenosyl-L-homocysteine + 3 H(+). Functionally, methylates histone H3 at 'Lys-4' (H3K4me). Acts as a transcriptional repressor. Essential for cardiomyocyte differentiation and cardiac morphogenesis. The chain is Histone-lysine N-methyltransferase Smyd1 (Smyd1) from Mus musculus (Mouse).